An 84-amino-acid polypeptide reads, in one-letter code: Cell division topological specificity factor (84 aa).

It belongs to the MinE family.

Functionally, prevents the cell division inhibition by proteins MinC and MinD at internal division sites while permitting inhibition at polar sites. This ensures cell division at the proper site by restricting the formation of a division septum at the midpoint of the long axis of the cell. The chain is Cell division topological specificity factor from Cupriavidus taiwanensis (strain DSM 17343 / BCRC 17206 / CCUG 44338 / CIP 107171 / LMG 19424 / R1) (Ralstonia taiwanensis (strain LMG 19424)).